The sequence spans 307 residues: S-methyl-5'-thioadenosine phosphorylase (307 aa).

Phosphate-binding positions include Thr20, 62 to 63, and 95 to 96; these read RH and SA. Position 197 (Met197) interacts with substrate. Ser198 is a binding site for phosphate. 221–223 is a binding site for substrate; it reads DYD.

Belongs to the PNP/MTAP phosphorylase family. MTAP subfamily. As to quaternary structure, homotrimer.

The protein resides in the cytoplasm. It is found in the nucleus. It catalyses the reaction S-methyl-5'-thioadenosine + phosphate = 5-(methylsulfanyl)-alpha-D-ribose 1-phosphate + adenine. Its pathway is amino-acid biosynthesis; L-methionine biosynthesis via salvage pathway; S-methyl-5-thio-alpha-D-ribose 1-phosphate from S-methyl-5'-thioadenosine (phosphorylase route): step 1/1. Its function is as follows. Catalyzes the reversible phosphorylation of S-methyl-5'-thioadenosine (MTA) to adenine and 5-methylthioribose-1-phosphate. Involved in the breakdown of MTA, a major by-product of polyamine biosynthesis. Responsible for the first step in the methionine salvage pathway after MTA has been generated from S-adenosylmethionine. Has broad substrate specificity with 6-aminopurine nucleosides as preferred substrates. In Fusarium vanettenii (strain ATCC MYA-4622 / CBS 123669 / FGSC 9596 / NRRL 45880 / 77-13-4) (Fusarium solani subsp. pisi), this protein is S-methyl-5'-thioadenosine phosphorylase.